We begin with the raw amino-acid sequence, 517 residues long: DNA primase DnaG (517 aa).

The region spanning Asp-171–Val-257 is the Toprim domain. Mg(2+) is bound by residues Glu-177, Asp-219, and Asp-221.

This sequence belongs to the archaeal DnaG primase family. Forms a ternary complex with MCM helicase and DNA. Component of the archaeal exosome complex. It depends on Mg(2+) as a cofactor.

The catalysed reaction is ssDNA + n NTP = ssDNA/pppN(pN)n-1 hybrid + (n-1) diphosphate.. RNA polymerase that catalyzes the synthesis of short RNA molecules used as primers for DNA polymerase during DNA replication. Also part of the exosome, which is a complex involved in RNA degradation. Acts as a poly(A)-binding protein that enhances the interaction between heteromeric, adenine-rich transcripts and the exosome. This Methanosarcina barkeri (strain Fusaro / DSM 804) protein is DNA primase DnaG.